A 342-amino-acid chain; its full sequence is S-adenosylmethionine:tRNA ribosyltransferase-isomerase (342 aa).

Belongs to the QueA family. Monomer.

The protein resides in the cytoplasm. The catalysed reaction is 7-aminomethyl-7-carbaguanosine(34) in tRNA + S-adenosyl-L-methionine = epoxyqueuosine(34) in tRNA + adenine + L-methionine + 2 H(+). The protein operates within tRNA modification; tRNA-queuosine biosynthesis. Functionally, transfers and isomerizes the ribose moiety from AdoMet to the 7-aminomethyl group of 7-deazaguanine (preQ1-tRNA) to give epoxyqueuosine (oQ-tRNA). The polypeptide is S-adenosylmethionine:tRNA ribosyltransferase-isomerase (Bacillus velezensis (strain DSM 23117 / BGSC 10A6 / LMG 26770 / FZB42) (Bacillus amyloliquefaciens subsp. plantarum)).